Consider the following 384-residue polypeptide: Zinc metalloproteinase nas-12 (384 aa).

A signal peptide spans 1–25 (MLYIPQFSIYFCLGYLLLFCKISNA). The Peptidase M12A domain occupies 73-271 (VSIKGSSMNR…EKLNRLGQCG (199 aa)). 5 cysteine pairs are disulfide-bonded: Cys116/Cys270, Cys137/Cys156, Cys287/Cys325, Cys296/Cys318, and Cys305/Cys322. His164 is a Zn(2+) binding site. The active site involves Glu165. Zn(2+) contacts are provided by His168 and His174. A ShKT 1 domain is found at 287–325 (CQDVATAVSCEGNRRRGMCKNPFYKQMMIKSCQKTCRLC). A glycan (N-linked (GlcNAc...) asparagine) is linked at Asn340. 3 cysteine pairs are disulfide-bonded: Cys348-Cys384, Cys355-Cys377, and Cys364-Cys381. Residues 348–384 (CEDKHPRCDIYSHNGFCTLPFYDDVRYQLCAKTCNLC) enclose the ShKT 2 domain.

Zn(2+) is required as a cofactor. In terms of tissue distribution, expressed in pharyngeal glands.

It localises to the secreted. Functionally, metalloprotease. This is Zinc metalloproteinase nas-12 (nas-12) from Caenorhabditis elegans.